A 559-amino-acid polypeptide reads, in one-letter code: Oxygen-dependent choline dehydrogenase (559 aa).

Residue D4–E33 coordinates FAD. A disordered region spans residues E182–A201. Catalysis depends on H471, which acts as the Proton acceptor.

This sequence belongs to the GMC oxidoreductase family. FAD is required as a cofactor.

It catalyses the reaction choline + A = betaine aldehyde + AH2. It carries out the reaction betaine aldehyde + NAD(+) + H2O = glycine betaine + NADH + 2 H(+). The protein operates within amine and polyamine biosynthesis; betaine biosynthesis via choline pathway; betaine aldehyde from choline (cytochrome c reductase route): step 1/1. Functionally, involved in the biosynthesis of the osmoprotectant glycine betaine. Catalyzes the oxidation of choline to betaine aldehyde and betaine aldehyde to glycine betaine at the same rate. The sequence is that of Oxygen-dependent choline dehydrogenase from Pectobacterium carotovorum subsp. carotovorum (strain PC1).